We begin with the raw amino-acid sequence, 233 residues long: Pirin-like protein YhaK (233 aa).

The protein belongs to the pirin family. In terms of assembly, monomer.

It is found in the cytoplasm. Does not have quercetin 2,3-dioxygenase activity. The sequence is that of Pirin-like protein YhaK (yhaK) from Escherichia coli O157:H7.